Reading from the N-terminus, the 421-residue chain is UDP-N-acetylglucosamine 1-carboxyvinyltransferase (421 aa).

K22–N23 provides a ligand contact to phosphoenolpyruvate. R93 serves as a coordination point for UDP-N-acetyl-alpha-D-glucosamine. Residue C117 is the Proton donor of the active site. C117 is modified (2-(S-cysteinyl)pyruvic acid O-phosphothioketal). UDP-N-acetyl-alpha-D-glucosamine is bound by residues R122–L126, D308, and V330.

Belongs to the EPSP synthase family. MurA subfamily.

It is found in the cytoplasm. The enzyme catalyses phosphoenolpyruvate + UDP-N-acetyl-alpha-D-glucosamine = UDP-N-acetyl-3-O-(1-carboxyvinyl)-alpha-D-glucosamine + phosphate. The protein operates within cell wall biogenesis; peptidoglycan biosynthesis. Functionally, cell wall formation. Adds enolpyruvyl to UDP-N-acetylglucosamine. This Pseudomonas paraeruginosa (strain DSM 24068 / PA7) (Pseudomonas aeruginosa (strain PA7)) protein is UDP-N-acetylglucosamine 1-carboxyvinyltransferase.